A 176-amino-acid polypeptide reads, in one-letter code: Glutamyl-tRNA(Gln) amidotransferase subunit F, mitochondrial (176 aa).

Belongs to the GatF family. As to quaternary structure, subunit of the heterotrimeric GatFAB amidotransferase (AdT) complex, composed of A, B and F subunits.

Its subcellular location is the mitochondrion inner membrane. It carries out the reaction L-glutamyl-tRNA(Gln) + L-glutamine + ATP + H2O = L-glutaminyl-tRNA(Gln) + L-glutamate + ADP + phosphate + H(+). Allows the formation of correctly charged Gln-tRNA(Gln) through the transamidation of misacylated Glu-tRNA(Gln) in the mitochondria. The reaction takes place in the presence of glutamine and ATP through an activated gamma-phospho-Glu-tRNA(Gln). Required for proper protein synthesis within the mitochondrion. The chain is Glutamyl-tRNA(Gln) amidotransferase subunit F, mitochondrial from Yarrowia lipolytica (strain CLIB 122 / E 150) (Yeast).